Consider the following 481-residue polypeptide: Glutamyl-tRNA(Gln) amidotransferase subunit A (481 aa).

Active-site charge relay system residues include lysine 76 and serine 151. Serine 175 functions as the Acyl-ester intermediate in the catalytic mechanism.

The protein belongs to the amidase family. GatA subfamily. Heterotrimer of A, B and C subunits.

It catalyses the reaction L-glutamyl-tRNA(Gln) + L-glutamine + ATP + H2O = L-glutaminyl-tRNA(Gln) + L-glutamate + ADP + phosphate + H(+). Its function is as follows. Allows the formation of correctly charged Gln-tRNA(Gln) through the transamidation of misacylated Glu-tRNA(Gln) in organisms which lack glutaminyl-tRNA synthetase. The reaction takes place in the presence of glutamine and ATP through an activated gamma-phospho-Glu-tRNA(Gln). The sequence is that of Glutamyl-tRNA(Gln) amidotransferase subunit A from Chlorobaculum tepidum (strain ATCC 49652 / DSM 12025 / NBRC 103806 / TLS) (Chlorobium tepidum).